Consider the following 900-residue polypeptide: MAKPCYAVVDLETTGNQLDYDEIIQIGITFVRENKIIGTYHSMIKTDLEIPPFIQALTSIEEDMLNQAPYFHEIAEDIYKQIDGCIFVAHNVAFDLNFIKKSFKQCHINYRPKKVMDTLELFKVAFPTDKSYQLSELAEAHGIILNNAHRADEDAATTAQLMIIAFEKFESLPLDTLKQLYYLSKNLKYDLHDIIFEMVRNYDEQTLSDRFDQFEQIIYKKQIDFKAPTVQFGGNLKALYTLVTKELGLTYRPQQLYLSEIILEQLMHSEKAMIEAPLGSGKSFAYLLASLMYNIETGKHVMISTNTKLLQNQLLEKDIPAIKKALDFKINATLIKSKRDYIALGLISQILEEESSNYEVCILKMQLLIWITETDTGDIQELDLKGGQKMYFEQKLETYVPVRNDIHYFNFIKRNAQNIQIGITNHAHLIHAAHDNSIYQLFDDCIIDEAHRLPDYALNQVTNELSYADIKYQLGLIGKTENEKLLKSIDLLEQQRILEKLDIPPIDVFGLKTTVNEIHDLNEQLFTTMYDIIQSSEIQDDEVHKLHFVYHFDVTPILNDLHAIIHKLNMTLEFFNGMSHKSIKSVRKQFLYINDRFKDIEQSLKNKHTCYLSIKNLNQKSTIRLNVKDYDVKEILTKQVLDKFKSLTFISGTLTFNHSFENFKQWFNKDIEFNTYEIDTTVTSPNQTTVFIPNDVSSYNYKNINDYVSSIVNYVIEYVSVVESKCLILFTSYKMMHMVQELINELPEFEDYVVLTQQQNQNYKIVQQFNSFNKAILLGTGTFFEGFDFQSNGIKCVMIAKLPFMNQNNTKYWLMESEFTSTFKEYVLPDAVTRFRQGLGRLIRSENDKGIIVSFDDRLIRSNYKQFFEQSLERYRQKKGDIKQFSTLLKKLKKENAKKP.

Residues 8-161 enclose the Exonuclease domain; the sequence is VVDLETTGNQ…DEDAATTAQL (154 aa). Residues 241–496 enclose the Helicase ATP-binding domain; the sequence is TLVTKELGLT…KSIDLLEQQR (256 aa). 276 to 283 provides a ligand contact to ATP; that stretch reads APLGSGKS. The short motif at 448–451 is the DEAH box element; sequence DEAH. Residues 714–883 form the Helicase C-terminal domain; that stretch reads YVIEYVSVVE…RYRQKKGDIK (170 aa).

The protein belongs to the helicase family. DinG subfamily. Type 2 sub-subfamily.

Functionally, 3'-5' exonuclease. The sequence is that of 3'-5' exonuclease DinG from Staphylococcus saprophyticus subsp. saprophyticus (strain ATCC 15305 / DSM 20229 / NCIMB 8711 / NCTC 7292 / S-41).